Reading from the N-terminus, the 238-residue chain is Succinate dehydrogenase iron-sulfur subunit (238 aa).

The region spanning 1-97 is the 2Fe-2S ferredoxin-type domain; the sequence is MKLEFSIYRY…KIVIRPLPGL (97 aa). [2Fe-2S] cluster-binding residues include Cys-55, Cys-60, and Cys-75. Residues 139–169 enclose the 4Fe-4S ferredoxin-type domain; that stretch reads QREKLDGLYECILCACCSTSCPSFWWNPDKF. [4Fe-4S] cluster-binding residues include Cys-149, Cys-152, and Cys-155. Cys-159 is a [3Fe-4S] cluster binding site. Trp-164 lines the a ubiquinone pocket. [3Fe-4S] cluster is bound by residues Cys-206 and Cys-212. Cys-216 provides a ligand contact to [4Fe-4S] cluster.

This sequence belongs to the succinate dehydrogenase/fumarate reductase iron-sulfur protein family. As to quaternary structure, part of an enzyme complex containing four subunits: a flavoprotein, an iron-sulfur, cytochrome b-556, and a hydrophobic anchor protein. Requires [2Fe-2S] cluster as cofactor. [3Fe-4S] cluster is required as a cofactor. The cofactor is [4Fe-4S] cluster.

It catalyses the reaction a quinone + succinate = fumarate + a quinol. The protein operates within carbohydrate metabolism; tricarboxylic acid cycle; fumarate from succinate (bacterial route): step 1/1. Its function is as follows. Two distinct, membrane-bound, FAD-containing enzymes are responsible for the catalysis of fumarate and succinate interconversion; the fumarate reductase is used in anaerobic growth, and the succinate dehydrogenase is used in aerobic growth. In Salmonella typhimurium (strain LT2 / SGSC1412 / ATCC 700720), this protein is Succinate dehydrogenase iron-sulfur subunit (sdhB).